The chain runs to 314 residues: MDVSIIGASGKIGSVLSLLLAKESHIKNINLIARSSSINKLKGLKMDLYDAMAAAGQDTDIDICCDDDLSCTANSDITIITAGMARTGEMSRIDLMKGNAKIVKNYVKNIANFGDTKIFMISNPVDLMTYKALIESGYEKNQVFGLGTHLDSMRFKVAVAKHFEVHLDDVRTRIVGEHGDSMVPVISATAVGGIPIKRLPKYEDFPYEKILERIKGYGQEIINLKNGSEYGPASAIVNIVRCIAHDEKRLLTLSTYIEDEIEGIEGGCCIGVPVKVGKNGIEEVIHIKMEDDEIEGFKKSFELVKGYCRQIESI.

Position 7-13 (7-13 (GASGKIG)) interacts with NADP(+). 2 residues coordinate substrate: Arg-86 and Arg-92. NADP(+) is bound by residues Asn-99 and 121-123 (ISN). 2 residues coordinate substrate: Asn-123 and Arg-154. His-178 (proton acceptor) is an active-site residue.

This sequence belongs to the LDH/MDH superfamily.

It carries out the reaction (S)-malate + NADP(+) = oxaloacetate + NADPH + H(+). It catalyses the reaction (S)-malate + NAD(+) = oxaloacetate + NADH + H(+). In terms of biological role, catalyzes the reversible oxidation of malate to oxaloacetate. In Methanococcus maripaludis (strain DSM 14266 / JCM 13030 / NBRC 101832 / S2 / LL), this protein is Malate dehydrogenase (mdh).